Here is a 397-residue protein sequence, read N- to C-terminus: Phosphoglycerate kinase (397 aa).

Residues 21–23, Arg36, 59–62, Arg118, and Arg151 contribute to the substrate site; these read DFN and HLGR. ATP contacts are provided by residues Lys202, Gly293, Glu324, and 353–356; that span reads GGDS.

It belongs to the phosphoglycerate kinase family. Monomer.

The protein resides in the cytoplasm. It catalyses the reaction (2R)-3-phosphoglycerate + ATP = (2R)-3-phospho-glyceroyl phosphate + ADP. It participates in carbohydrate degradation; glycolysis; pyruvate from D-glyceraldehyde 3-phosphate: step 2/5. The protein is Phosphoglycerate kinase of Chloroherpeton thalassium (strain ATCC 35110 / GB-78).